The chain runs to 160 residues: Small ribosomal subunit protein uS7B (160 aa).

It belongs to the universal ribosomal protein uS7 family. As to quaternary structure, part of the 30S ribosomal subunit. Contacts proteins S9 and S11.

Functionally, one of the primary rRNA binding proteins, it binds directly to 16S rRNA where it nucleates assembly of the head domain of the 30S subunit. Is located at the subunit interface close to the decoding center, probably blocks exit of the E-site tRNA. In Aquifex aeolicus (strain VF5), this protein is Small ribosomal subunit protein uS7B.